A 317-amino-acid chain; its full sequence is Ubiquinone biosynthesis protein COQ9-A, mitochondrial (317 aa).

Residues 1–46 (MAASVTRVLKGAGGRQLLLMVARRRPVLMQPFLLMPRKFWVSSALR) constitute a mitochondrion transit peptide. A disordered region spans residues 50–97 (QRQPPFSASSTHAETQGHAEEQYQQKQPPPRYTDQAGEESEGYESEEQ). The segment covering 53-63 (PPFSASSTHAE) has biased composition (polar residues). A compositionally biased stretch (acidic residues) spans 85 to 96 (AGEESEGYESEE). Arginine 243 provides a ligand contact to a 1,2-diacylglycero-3-phosphoethanolamine.

Belongs to the COQ9 family. In terms of assembly, homodimer. Heterodimer; two heterodimers of COQ7:COQ9 come together on the same side of the lipid pseudo-bilayer and form a curved tetramer with a hydrophobic surface suitable for membrane interaction. These two tetramers assemble into a soluble octamer with a pseudo-bilayer of lipids captured within. Interacts with COQ7; this interaction allows ubiquinone (CoQ) isoprene intermediates presentation to COQ7 and facilitates the COQ7-mediated hydroxylase step.

The protein localises to the mitochondrion. Its pathway is cofactor biosynthesis; ubiquinone biosynthesis. Membrane-associated protein that warps the membrane surface to access and bind aromatic isoprenes with high specificity, including ubiquinone (CoQ) isoprene intermediates and presents them directly to COQ7, therefore facilitating the COQ7-mediated hydroxylase step. Participates in the biosynthesis of coenzyme Q, also named ubiquinone, an essential lipid-soluble electron transporter for aerobic cellular respiration. The polypeptide is Ubiquinone biosynthesis protein COQ9-A, mitochondrial (coq9-a) (Xenopus laevis (African clawed frog)).